A 94-amino-acid polypeptide reads, in one-letter code: DNA-directed RNA polymerase subunit omega (94 aa).

Belongs to the RNA polymerase subunit omega family. The RNAP catalytic core consists of 2 alpha, 1 beta, 1 beta' and 1 omega subunit. When a sigma factor is associated with the core the holoenzyme is formed, which can initiate transcription.

It catalyses the reaction RNA(n) + a ribonucleoside 5'-triphosphate = RNA(n+1) + diphosphate. Functionally, promotes RNA polymerase assembly. Latches the N- and C-terminal regions of the beta' subunit thereby facilitating its interaction with the beta and alpha subunits. In Frankia casuarinae (strain DSM 45818 / CECT 9043 / HFP020203 / CcI3), this protein is DNA-directed RNA polymerase subunit omega.